A 313-amino-acid chain; its full sequence is Ribosomal RNA small subunit methyltransferase H (313 aa).

S-adenosyl-L-methionine-binding positions include 35–37 (GGH), Asp-55, Phe-79, Asp-101, and Gln-108.

The protein belongs to the methyltransferase superfamily. RsmH family.

It is found in the cytoplasm. The catalysed reaction is cytidine(1402) in 16S rRNA + S-adenosyl-L-methionine = N(4)-methylcytidine(1402) in 16S rRNA + S-adenosyl-L-homocysteine + H(+). Functionally, specifically methylates the N4 position of cytidine in position 1402 (C1402) of 16S rRNA. This is Ribosomal RNA small subunit methyltransferase H from Escherichia coli O81 (strain ED1a).